A 396-amino-acid chain; its full sequence is Probable protein phosphatase 2C 25 (396 aa).

The segment at 32-98 (ESLSLTLSHR…SPPGGVLKRK (67 aa)) is disordered. Over residues 44-61 (QTSSPSSPSTTVSSPKSP) the composition is skewed to low complexity. One can recognise a PPM-type phosphatase domain in the interval 139–392 (GYSVYCKRGR…DDISVMLIPL (254 aa)). 4 residues coordinate Mn(2+): Asp175, Gly176, Asp338, and Asp383.

The protein belongs to the PP2C family. In terms of assembly, interacts with MPK4 and MPK6. It depends on Mg(2+) as a cofactor. Requires Mn(2+) as cofactor.

The protein resides in the cytoplasm. It is found in the nucleus. The catalysed reaction is O-phospho-L-seryl-[protein] + H2O = L-seryl-[protein] + phosphate. It carries out the reaction O-phospho-L-threonyl-[protein] + H2O = L-threonyl-[protein] + phosphate. Its function is as follows. Protein phosphatase that negatively regulates defense respones. Inactivates MPK4 and MPK6 MAP kinases involved in stress and defense signaling. The polypeptide is Probable protein phosphatase 2C 25 (Arabidopsis thaliana (Mouse-ear cress)).